Consider the following 207-residue polypeptide: ATP synthase subunit a (207 aa).

The next 6 membrane-spanning stretches (helical) occupy residues 3–23 (QHVI…TIFA), 62–82 (LIAS…IPGL), 88–108 (NLNT…FEGI), 119–139 (FLGP…LSHL), 158–178 (LISV…VMLI), and 180–200 (LIAV…YIAG).

This sequence belongs to the ATPase A chain family. In terms of assembly, F-type ATPases have 2 components, CF(1) - the catalytic core - and CF(0) - the membrane proton channel. CF(1) has five subunits: alpha(3), beta(3), gamma(1), delta(1), epsilon(1). CF(0) has three main subunits: a(1), b(2) and c(9-12). The alpha and beta chains form an alternating ring which encloses part of the gamma chain. CF(1) is attached to CF(0) by a central stalk formed by the gamma and epsilon chains, while a peripheral stalk is formed by the delta and b chains.

It localises to the cell inner membrane. Functionally, key component of the proton channel; it plays a direct role in the translocation of protons across the membrane. This is ATP synthase subunit a from Sulfurihydrogenibium sp. (strain YO3AOP1).